The sequence spans 464 residues: E3 ubiquitin-protein ligase RNF38 (464 aa).

The disordered stretch occupies residues 1–94 (MRESEDSPSP…NSISQDENYH (94 aa)). Residues 6–20 (DSPSPKRQRLSHSVF) carry the Bipartite nuclear localization signal 1 motif. Residues 38-53 (MTSNRQPPSVRPNQHH) show a composition bias toward polar residues. The Bipartite nuclear localization signal 2 signature appears at 64–79 (RNRRSPPVRRQRGRRE). Over residues 64 to 83 (RNRRSPPVRRQRGRRERLSR) the composition is skewed to basic residues. An RING-type zinc finger spans residues 412 to 453 (CVVCMCDFESRQLLRVLPCNHEFHAKCVDKWLKGNRTCPICR).

Its subcellular location is the nucleus. It carries out the reaction S-ubiquitinyl-[E2 ubiquitin-conjugating enzyme]-L-cysteine + [acceptor protein]-L-lysine = [E2 ubiquitin-conjugating enzyme]-L-cysteine + N(6)-ubiquitinyl-[acceptor protein]-L-lysine.. It functions in the pathway protein modification; protein ubiquitination. Acts as an E3 ubiquitin-protein ligase able to ubiquitinate p53/TP53 which promotes its relocalization to discrete foci associated with PML nuclear bodies. Exhibits preference for UBE2D2 as a E2 enzyme. This Mus musculus (Mouse) protein is E3 ubiquitin-protein ligase RNF38.